Here is a 194-residue protein sequence, read N- to C-terminus: Interleukin-18 (194 aa).

Positions 1–36 (MAAMSEEGSCVNFKEMMFIDNTLYLIPEDNGDLESD) are excised as a propeptide.

This sequence belongs to the IL-1 family. Forms a ternary complex with ligand-binding receptor subunit IL18R1 and signaling receptor subunit IL18RAP at the plasma membrane. Mature IL18 first binds to IL18R1 forming a low affinity binary complex, which then interacts with IL18RAP to form a high affinity ternary complex that signals inside the cell. Interacts with cargo receptor TMED10; the interaction mediates the translocation from the cytoplasm into the ERGIC (endoplasmic reticulum-Golgi intermediate compartment) and thereby secretion. In terms of processing, the pro-IL-18 precursor is processed by CASP1 to yield its mature, active form. The pro-IL-18 precursor is however not processed by Casp4/Casp11 in rodents. The pro-IL-18 precursor features autoinhibitory interactions between the propeptide and the post-cleavage-site region, preventing recognition by the IL18R1 receptor. Processing by CASP1 induces conformational changes to generate critical receptor-binding sites. The mature form is then secreted and released in the extracellular milieu by passing through the gasdermin-D (GSDMD) pore. In contrast, cleavage by CASP3 inactivates IL18.

Its subcellular location is the cytoplasm. It localises to the cytosol. The protein resides in the secreted. Its function is as follows. Pro-inflammatory cytokine primarily involved in epithelial barrier repair, polarized T-helper 1 (Th1) cell and natural killer (NK) cell immune responses. Upon binding to IL18R1 and IL18RAP, forms a signaling ternary complex which activates NF-kappa-B, triggering synthesis of inflammatory mediators. Synergizes with IL12/interleukin-12 to induce IFNG synthesis from T-helper 1 (Th1) cells and natural killer (NK) cells. Involved in transduction of inflammation downstream of pyroptosis: its mature form is specifically released in the extracellular milieu by passing through the gasdermin-D (GSDMD) pore. In Rattus norvegicus (Rat), this protein is Interleukin-18 (Il18).